The primary structure comprises 134 residues: Probable RNA-binding protein MJ0652 (134 aa).

One can recognise a CRM domain in the interval Arg-11–Lys-108.

This chain is Probable RNA-binding protein MJ0652, found in Methanocaldococcus jannaschii (strain ATCC 43067 / DSM 2661 / JAL-1 / JCM 10045 / NBRC 100440) (Methanococcus jannaschii).